The chain runs to 558 residues: Ribonuclease J (558 aa).

The Zn(2+) site is built by His81, His83, Asp85, His86, His148, and Asp170. 371 to 375 (HVSGH) serves as a coordination point for substrate. His397 contributes to the Zn(2+) binding site.

It belongs to the metallo-beta-lactamase superfamily. RNA-metabolizing metallo-beta-lactamase-like family. Bacterial RNase J subfamily. As to quaternary structure, homodimer, may be a subunit of the RNA degradosome. It depends on Zn(2+) as a cofactor.

It localises to the cytoplasm. Its function is as follows. An RNase that has 5'-3' exonuclease and possibly endoonuclease activity. Involved in maturation of rRNA and in some organisms also mRNA maturation and/or decay. In Mycobacterium tuberculosis (strain CDC 1551 / Oshkosh), this protein is Ribonuclease J.